Here is a 534-residue protein sequence, read N- to C-terminus: Cysteine/serine-rich nuclear protein 2 (534 aa).

At Met1 the chain carries N-acetylmethionine. 2 disordered regions span residues 1 to 52 and 480 to 534; these read MDAF…FTPT and DCGL…PLAV. The segment covering 31 to 40 has biased composition (low complexity); it reads SSDSADSCDS. A compositionally biased stretch (polar residues) spans 42–52; sequence NPPTTASFTPT. Basic and acidic residues predominate over residues 480-492; the sequence is DCGLKEPESEDLH.

This sequence belongs to the AXUD1 family. As to expression, highest expression detected in thymus, brain and ovary. Low levels detected in naive T-cells.

Its subcellular location is the nucleus. In terms of biological role, binds to the consensus sequence 5'-AGAGTG-3' and has transcriptional activator activity. May play a role in apoptosis. This is Cysteine/serine-rich nuclear protein 2 (Csrnp2) from Mus musculus (Mouse).